The chain runs to 145 residues: RxLR effector protein BLR40 (145 aa).

The N-terminal stretch at 1 to 22 is a signal peptide; sequence MLLSRAISVVALLACICCGVHT. A RxLR-dEER motif is present at residues 44 to 58; sequence RRLRTSVDLVDNEER.

Belongs to the RxLR effector family.

It is found in the secreted. The protein localises to the host cell membrane. Secreted effector that triggers a robust hypersensitive response (HR) in Lactuca sativa cv. Design that is resistant to multiple B.lactucae races, including Bl:24. In Bremia lactucae (Lettuce downy mildew), this protein is RxLR effector protein BLR40.